Reading from the N-terminus, the 187-residue chain is UPF0301 protein YPO0936/y3322/YP_3506 (187 aa).

This sequence belongs to the UPF0301 (AlgH) family.

This Yersinia pestis protein is UPF0301 protein YPO0936/y3322/YP_3506.